The chain runs to 538 residues: Pyruvate kinase (538 aa).

Phosphoserine is present on Ser-45. Arg-72 is a substrate binding site. Residues Asn-74, Ser-76, Asp-107, and Thr-108 each contribute to the K(+) site. 74–77 (NFSH) is an ATP binding site. 2 residues coordinate ATP: Arg-114 and Lys-200. Residue Glu-265 participates in Mg(2+) binding. The substrate site is built by Gly-288, Asp-289, and Thr-321. Residue Asp-289 coordinates Mg(2+).

The protein belongs to the pyruvate kinase family. Homotetramer. It depends on Mg(2+) as a cofactor. Requires K(+) as cofactor.

The catalysed reaction is pyruvate + ATP = phosphoenolpyruvate + ADP + H(+). It participates in carbohydrate degradation; glycolysis; pyruvate from D-glyceraldehyde 3-phosphate: step 5/5. This is Pyruvate kinase (pki1) from Hypocrea jecorina (Trichoderma reesei).